A 117-amino-acid polypeptide reads, in one-letter code: Large ribosomal subunit protein uL22 (117 aa).

It belongs to the universal ribosomal protein uL22 family. As to quaternary structure, part of the 50S ribosomal subunit.

In terms of biological role, this protein binds specifically to 23S rRNA; its binding is stimulated by other ribosomal proteins, e.g. L4, L17, and L20. It is important during the early stages of 50S assembly. It makes multiple contacts with different domains of the 23S rRNA in the assembled 50S subunit and ribosome. Its function is as follows. The globular domain of the protein is located near the polypeptide exit tunnel on the outside of the subunit, while an extended beta-hairpin is found that lines the wall of the exit tunnel in the center of the 70S ribosome. This chain is Large ribosomal subunit protein uL22, found in Leptospira biflexa serovar Patoc (strain Patoc 1 / ATCC 23582 / Paris).